A 347-amino-acid chain; its full sequence is Heat-inducible transcription repressor HrcA (347 aa).

It belongs to the HrcA family.

Functionally, negative regulator of class I heat shock genes (grpE-dnaK-dnaJ and groELS operons). Prevents heat-shock induction of these operons. The polypeptide is Heat-inducible transcription repressor HrcA (Lactobacillus delbrueckii subsp. bulgaricus (strain ATCC BAA-365 / Lb-18)).